Consider the following 356-residue polypeptide: ATP-dependent 6-phosphofructokinase (356 aa).

Residues G15, 78-79, and 115-118 contribute to the ATP site; these read KG and GEGT. E116 serves as a coordination point for Mg(2+). Substrate contacts are provided by residues 138 to 140, R175, 182 to 184, E235, R272, and 278 to 281; these read TID, MGR, and HLQR. D140 acts as the Proton acceptor in catalysis.

Belongs to the phosphofructokinase type A (PFKA) family. Mixed-substrate PFK group III subfamily. In terms of assembly, homodimer or homotetramer. Requires Mg(2+) as cofactor.

It is found in the cytoplasm. It carries out the reaction beta-D-fructose 6-phosphate + ATP = beta-D-fructose 1,6-bisphosphate + ADP + H(+). Its pathway is carbohydrate degradation; glycolysis; D-glyceraldehyde 3-phosphate and glycerone phosphate from D-glucose: step 3/4. Functionally, catalyzes the phosphorylation of D-fructose 6-phosphate to fructose 1,6-bisphosphate by ATP, the first committing step of glycolysis. This chain is ATP-dependent 6-phosphofructokinase, found in Chloroflexus aggregans (strain MD-66 / DSM 9485).